The following is a 166-amino-acid chain: Crossover junction endodeoxyribonuclease RuvC (166 aa).

Active-site residues include D7, E70, and H143. D7, E70, and H143 together coordinate Mg(2+).

It belongs to the RuvC family. As to quaternary structure, homodimer which binds Holliday junction (HJ) DNA. The HJ becomes 2-fold symmetrical on binding to RuvC with unstacked arms; it has a different conformation from HJ DNA in complex with RuvA. In the full resolvosome a probable DNA-RuvA(4)-RuvB(12)-RuvC(2) complex forms which resolves the HJ. Requires Mg(2+) as cofactor.

It is found in the cytoplasm. It catalyses the reaction Endonucleolytic cleavage at a junction such as a reciprocal single-stranded crossover between two homologous DNA duplexes (Holliday junction).. Its function is as follows. The RuvA-RuvB-RuvC complex processes Holliday junction (HJ) DNA during genetic recombination and DNA repair. Endonuclease that resolves HJ intermediates. Cleaves cruciform DNA by making single-stranded nicks across the HJ at symmetrical positions within the homologous arms, yielding a 5'-phosphate and a 3'-hydroxyl group; requires a central core of homology in the junction. The consensus cleavage sequence is 5'-(A/T)TT(C/G)-3'. Cleavage occurs on the 3'-side of the TT dinucleotide at the point of strand exchange. HJ branch migration catalyzed by RuvA-RuvB allows RuvC to scan DNA until it finds its consensus sequence, where it cleaves and resolves the cruciform DNA. The polypeptide is Crossover junction endodeoxyribonuclease RuvC (Thermus thermophilus (strain ATCC BAA-163 / DSM 7039 / HB27)).